The chain runs to 553 residues: CTP synthase (553 aa).

The interval 1–270 (MTKYVFVTGG…DDLICRELEL (270 aa)) is amidoligase domain. Ser13 is a CTP binding site. Ser13 serves as a coordination point for UTP. Residues 14–19 (SLGKGI) and Asp71 contribute to the ATP site. Residues Asp71 and Glu144 each coordinate Mg(2+). CTP is bound by residues 151-153 (DIE), 191-196 (KTKPTQ), and Lys227. Residues 191–196 (KTKPTQ) and Lys227 contribute to the UTP site. Residues 295-547 (TIGMVGKYVE…IKAALIHQDA (253 aa)) enclose the Glutamine amidotransferase type-1 domain. Gly356 serves as a coordination point for L-glutamine. The active-site Nucleophile; for glutamine hydrolysis is the Cys383. L-glutamine is bound by residues 384 to 387 (LGMQ), Glu407, and Arg473. Catalysis depends on residues His520 and Glu522.

It belongs to the CTP synthase family. Homotetramer.

The catalysed reaction is UTP + L-glutamine + ATP + H2O = CTP + L-glutamate + ADP + phosphate + 2 H(+). The enzyme catalyses L-glutamine + H2O = L-glutamate + NH4(+). It carries out the reaction UTP + NH4(+) + ATP = CTP + ADP + phosphate + 2 H(+). The protein operates within pyrimidine metabolism; CTP biosynthesis via de novo pathway; CTP from UDP: step 2/2. With respect to regulation, allosterically activated by GTP, when glutamine is the substrate; GTP has no effect on the reaction when ammonia is the substrate. The allosteric effector GTP functions by stabilizing the protein conformation that binds the tetrahedral intermediate(s) formed during glutamine hydrolysis. Inhibited by the product CTP, via allosteric rather than competitive inhibition. Functionally, catalyzes the ATP-dependent amination of UTP to CTP with either L-glutamine or ammonia as the source of nitrogen. Regulates intracellular CTP levels through interactions with the four ribonucleotide triphosphates. In Polynucleobacter asymbioticus (strain DSM 18221 / CIP 109841 / QLW-P1DMWA-1) (Polynucleobacter necessarius subsp. asymbioticus), this protein is CTP synthase.